A 328-amino-acid chain; its full sequence is H-2 class I histocompatibility antigen, K-Q alpha chain (328 aa).

The interval 1-71 is alpha-1; sequence PRFISVGYVD…LLRYYNQSAG (71 aa). Over 1 to 265 the chain is Extracellular; the sequence is PRFISVGYVD…EPPPSAVSNT (265 aa). N-linked (GlcNAc...) asparagine glycosylation is present at Asn-67. Residues 72 to 163 form an alpha-2 region; that stretch reads GSHTIQRMYG…KNGNATLLRT (92 aa). Cys-82 and Cys-145 are joined by a disulfide. An N-linked (GlcNAc...) asparagine glycan is attached at Asn-157. The interval 164–255 is alpha-3; that stretch reads DSPKAHVTHH…GLPKPLTLRW (92 aa). One can recognise an Ig-like C1-type domain in the interval 166-252; the sequence is PKAHVTHHSR…YHQGLPKPLT (87 aa). A disulfide bridge connects residues Cys-184 and Cys-240. Residues 256–265 form a connecting peptide region; that stretch reads EPPPSAVSNT. A helical membrane pass occupies residues 266 to 289; the sequence is VIIAVLVVLGAAIVTGAVVAFVMM. Over 290–328 the chain is Cytoplasmic; sequence RRRNTGGKGGDYALAPGSQTSDLSLPDCKVMVHDPHSLA. Phosphoserine occurs at positions 310 and 313.

It belongs to the MHC class I family. In terms of assembly, heterodimer of an alpha chain and a beta chain (beta-2-microglobulin).

It localises to the membrane. Involved in the presentation of foreign antigens to the immune system. This chain is H-2 class I histocompatibility antigen, K-Q alpha chain (H2-K1), found in Mus musculus (Mouse).